We begin with the raw amino-acid sequence, 490 residues long: Katanin p60 ATPase-containing subunit A-like 1 (490 aa).

Met-1 carries the N-acetylmethionine modification. Positions 95 to 184 (DPAVWPPPVP…DGEMPKFDGA (90 aa)) are disordered. Residues 116 to 127 (PNREVRPLRKEM) show a composition bias toward basic and acidic residues. The span at 128–139 (AGVGARGPVGRA) shows a compositional bias: low complexity. A compositionally biased stretch (basic and acidic residues) spans 143-169 (SKSEKPSTSRDKDYRARGRDDKGRKNM). Ser-174 is subject to Phosphoserine. Position 248-255 (248-255 (GPPGTGKT)) interacts with ATP.

The protein belongs to the AAA ATPase family. Katanin p60 subunit A1 subfamily. A-like 1 sub-subfamily. In terms of assembly, interacts with KATNB1 and KATNBL1. In terms of tissue distribution, expressed in testis, restricted to Sertoli cells (at protein level).

The protein localises to the cytoplasm. Its subcellular location is the cytoskeleton. The protein resides in the spindle pole. It localises to the spindle. It catalyses the reaction n ATP + n H2O + a microtubule = n ADP + n phosphate + (n+1) alpha/beta tubulin heterodimers.. Regulates microtubule dynamics in Sertoli cells, a process that is essential for spermiogenesis and male fertility. Severs microtubules in an ATP-dependent manner, promoting rapid reorganization of cellular microtubule arrays. Has microtubule-severing activity in vitro. The protein is Katanin p60 ATPase-containing subunit A-like 1 of Homo sapiens (Human).